The chain runs to 317 residues: MPDSRPDTELSNPQSTKPPLDPHLKALENESIHIFREVAAEFERPVMLYSIGKDSSVLLHLARKAFYPGRVPFPLLHVNTGWKFAEMITFRDEIVKRYDLDLIEHINPRGKAENITPFTHGSARYTDIMKTEALRQALDAGQFDAAFGGARRDEEASRAKERIYSFRTPDHRWDPRNQRPELWNVYNGQIRKGESVRVFPLSNWTEVDIWRYIQAEDIPIVPLYFAEKRPVVERDGMMIMAADPRLELLPGEVKREEVIRFRTLGCFPLTGAIRSTATTLEDVIAELEIATVSERQGRAIDRDQSGSMEKKKREGYF.

2 disordered regions span residues 1 to 22 and 298 to 317; these read MPDS…PLDP and RAID…EGYF.

The protein belongs to the PAPS reductase family. CysD subfamily. Heterodimer composed of CysD, the smaller subunit, and CysN.

It catalyses the reaction sulfate + ATP + H(+) = adenosine 5'-phosphosulfate + diphosphate. The protein operates within sulfur metabolism; hydrogen sulfide biosynthesis; sulfite from sulfate: step 1/3. Its function is as follows. With CysN forms the ATP sulfurylase (ATPS) that catalyzes the adenylation of sulfate producing adenosine 5'-phosphosulfate (APS) and diphosphate, the first enzymatic step in sulfur assimilation pathway. APS synthesis involves the formation of a high-energy phosphoric-sulfuric acid anhydride bond driven by GTP hydrolysis by CysN coupled to ATP hydrolysis by CysD. In Rhizobium tropici, this protein is Sulfate adenylyltransferase subunit 2 (cysD).